Consider the following 308-residue polypeptide: Solute carrier family 25 member 47 (308 aa).

3 Solcar repeats span residues 1 to 80 (MDFV…CLAH), 93 to 206 (PTKA…LCEW), and 215 to 302 (PDVP…VLRL). Transmembrane regions (helical) follow at residues 3 to 23 (FVAG…LDTV), 49 to 69 (VWGF…VSSV), 98 to 116 (ITLS…TSPT), 190 to 210 (GHSF…LSPA), 217 to 237 (VPGV…VATP), and 273 to 293 (VLFK…MVVF).

It belongs to the mitochondrial carrier (TC 2.A.29) family. Specifically expressed in liver.

The protein localises to the mitochondrion inner membrane. Its subcellular location is the mitochondrion outer membrane. The enzyme catalyses NAD(+)(in) = NAD(+)(out). The catalysed reaction is acetyl-CoA(in) = acetyl-CoA(out). Functionally, mitochondrial NAD(+) transporter that acts as a 'metabolic gate' in hepatic lipogenesis. Provides NAD(+) substrate to mitochondrial SIRT3 deacetylase and enables its NAD(+)-dependent activities in mitochondrial energy metabolism. This triggers downstream activation of PRKAA1/AMPK-alpha signaling cascade that negatively regulates sterol regulatory element-binding protein (SREBP) transcriptional activities and ATP-consuming lipogenesis to restore cellular energy balance. May transport other mitochondrial metabolites having an aromatic nucleotide and phosphate groups, such as acetyl-CoA. Does not transport amino acids. The transport mechanism remains to be elucidated. The protein is Solute carrier family 25 member 47 of Homo sapiens (Human).